Reading from the N-terminus, the 386-residue chain is Zinc finger protein 385A (386 aa).

The segment at 74 to 98 (ISCNVCQIRFNSQSQAEAHYKGNRH) adopts a Matrin-type 1 zinc-finger fold. The disordered stretch occupies residues 88 to 193 (QAEAHYKGNR…ASLPGGSKEE (106 aa)). Over residues 103–121 (KGIEAAKTRGREPSVRESG) the composition is skewed to basic and acidic residues. The tract at residues 145-351 (NGLGPAPGSP…AGSPLSLRPA (207 aa)) is necessary for binding to ITPR1, CEBPA and p53/TP53 mRNAs. At Ser185 the chain carries Phosphoserine. A Matrin-type 2 zinc finger spans residues 201–225 (LYCALCKVAVNSLSQLEAHNKGTKH). At Thr248 the chain carries Phosphothreonine. A Matrin-type 3 zinc finger spans residues 261-285 (FHCEICNVKVNSEVQLKQHISSRRH). The segment at 279–305 (HISSRRHRDGVAGKPNPLLSRHKKPRG) is disordered.

In terms of assembly, interacts with p53/TP53; the interaction is direct and enhances p53/TP53 transactivation functions on cell-cycle arrest target genes, resulting in growth arrest. Interacts with ELAVL1; the interaction is indirect, mRNA-dependent and may regulate p53/TP53 expression. Ubiquitinated upon prolonged exposure to genotoxic stress, which leads to proteasomal degradation of ZNF385A and releases p53/TP53 from cell-cycle arrest target gene promoters. As to expression, expressed in brain and testis (at protein level). In brain, the expression is located to olfactory bulb, cerebral cortex, hippocampus, satellite cells and Purkinje cells of the cerebellum molecular layer. Detected in bone marrow, white and brown adipose tissue, lung and at lower levels in the thymus.

Its subcellular location is the cytoplasm. The protein resides in the nucleus. The protein localises to the nucleolus. It localises to the cell projection. It is found in the dendrite. In terms of biological role, RNA-binding protein that affects the localization and the translation of a subset of mRNA. May play a role in adipogenesis through binding to the 3'-UTR of CEBPA mRNA and regulation of its translation. Targets ITPR1 mRNA to dendrites in Purkinje cells, and may regulate its activity-dependent translation. With ELAVL1, binds the 3'-UTR of p53/TP53 mRNAs to control their nuclear export induced by CDKN2A. Hence, may regulate p53/TP53 expression and mediate in part the CDKN2A anti-proliferative activity. May also bind CCNB1 mRNA. Alternatively, may also regulate p53/TP53 activity through direct protein-protein interaction. Interacts with p53/TP53 and promotes cell-cycle arrest over apoptosis enhancing preferentially the DNA binding and transactivation of p53/TP53 on cell-cycle arrest target genes over proapoptotic target genes. May also regulate the ubiquitination and stability of CDKN1A promoting DNA damage-induced cell cycle arrest. Also plays a role in megakaryocytes differentiation. The chain is Zinc finger protein 385A (Znf385a) from Mus musculus (Mouse).